The sequence spans 78 residues: Putative defensin-like protein 288 (78 aa).

The N-terminal stretch at 1-21 (MSNLRLTIAVFLAALFQTLWW) is a signal peptide.

It belongs to the DEFL family.

It is found in the secreted. This chain is Putative defensin-like protein 288, found in Arabidopsis thaliana (Mouse-ear cress).